The sequence spans 688 residues: Amino-acid acetyltransferase, mitochondrial (688 aa).

The transit peptide at 1–45 (MSSRALTWPRTAKSSLLKQQTSSFVGQPKLGTPNCRSFSSTADRP) directs the protein to the mitochondrion. Disordered regions lie at residues 1–59 (MSSR…SKSY) and 96–119 (LKAQ…TVTQ). Polar residues-rich tracts occupy residues 12-25 (AKSS…SSFV), 34-57 (NCRS…SSSK), and 106-119 (TEPT…TVTQ). The N-acetyltransferase domain maps to 509 to 678 (NRPRLSLDDP…YEQVCRSIQP (170 aa)).

This sequence belongs to the acetyltransferase family.

The protein resides in the mitochondrion. The enzyme catalyses L-glutamate + acetyl-CoA = N-acetyl-L-glutamate + CoA + H(+). The protein operates within amino-acid biosynthesis; L-arginine biosynthesis; N(2)-acetyl-L-ornithine from L-glutamate: step 1/4. N-acetylglutamate synthase involved in arginine biosynthesis. In Aspergillus flavus (strain ATCC 200026 / FGSC A1120 / IAM 13836 / NRRL 3357 / JCM 12722 / SRRC 167), this protein is Amino-acid acetyltransferase, mitochondrial (arg2).